Reading from the N-terminus, the 128-residue chain is Crossover junction endodeoxyribonuclease Hjc (128 aa).

Residue Glu10 coordinates Mg(2+). Ser30 is a catalytic residue. Mg(2+) is bound by residues Asp34 and Glu47.

This sequence belongs to the Holliday junction resolvase Hjc family. As to quaternary structure, homodimer. Mg(2+) is required as a cofactor.

It carries out the reaction Endonucleolytic cleavage at a junction such as a reciprocal single-stranded crossover between two homologous DNA duplexes (Holliday junction).. Functionally, a structure-specific endonuclease that resolves Holliday junction (HJ) intermediates during genetic recombination. Cleaves 4-way DNA junctions introducing paired nicks in opposing strands, leaving a 5'-terminal phosphate and a 3'-terminal hydroxyl group that are subsequently ligated to produce recombinant products. The protein is Crossover junction endodeoxyribonuclease Hjc of Thermococcus kodakarensis (strain ATCC BAA-918 / JCM 12380 / KOD1) (Pyrococcus kodakaraensis (strain KOD1)).